The chain runs to 152 residues: Transcriptional repressor NrdR (152 aa).

The interval 1–21 is disordered; sequence MRCPFCGNGDTQVKDSRPTED. A zinc finger lies at 3–34; sequence CPFCGNGDTQVKDSRPTEDSAAIRRRRFCPAC. Basic and acidic residues predominate over residues 12 to 21; sequence QVKDSRPTED. The 91-residue stretch at 49–139 folds into the ATP-cone domain; it reads LVIVKKDGQR…VYRNFREAKD (91 aa).

The protein belongs to the NrdR family. Zn(2+) serves as cofactor.

Functionally, negatively regulates transcription of bacterial ribonucleotide reductase nrd genes and operons by binding to NrdR-boxes. The polypeptide is Transcriptional repressor NrdR (Rhodospirillum rubrum (strain ATCC 11170 / ATH 1.1.1 / DSM 467 / LMG 4362 / NCIMB 8255 / S1)).